Here is a 152-residue protein sequence, read N- to C-terminus: Protein SprT-like (152 aa).

The SprT-like domain occupies 7–148; sequence QRLVEEVSLQ…GKCKGKLILI (142 aa). Histidine 67 lines the Zn(2+) pocket. The active site involves glutamate 68. Histidine 71 contributes to the Zn(2+) binding site.

The protein belongs to the SprT family. It depends on Zn(2+) as a cofactor.

The protein resides in the cytoplasm. This is Protein SprT-like from Bacillus thuringiensis subsp. konkukian (strain 97-27).